The primary structure comprises 614 residues: Two-component response regulator ORR33 (614 aa).

One can recognise a Response regulatory domain in the interval 14 to 139 (RVMIIDDDAK…VMARLWRVVA (126 aa)). At D67 the chain carries 4-aspartylphosphate. The tract at residues 193-220 (RQLTINVVDDGNRGSGSGGGGGGGADAN) is disordered. Residues 205–217 (RGSGSGGGGGGGA) show a composition bias toward gly residues.

This sequence belongs to the ARR family. Type-B subfamily. Post-translationally, two-component system major event consists of a His-to-Asp phosphorelay between a sensor histidine kinase (HK) and a response regulator (RR). In plants, the His-to-Asp phosphorelay involves an additional intermediate named Histidine-containing phosphotransfer protein (HPt). This multistep phosphorelay consists of a His-Asp-His-Asp sequential transfer of a phosphate group between first a His and an Asp of the HK protein, followed by the transfer to a conserved His of the HPt protein and finally the transfer to an Asp in the receiver domain of the RR protein.

Functions as a response regulator involved in His-to-Asp phosphorelay signal transduction system. Phosphorylation of the Asp residue in the receiver domain activates the ability of the protein to promote the transcription of target genes. May directly activate some type-A response regulators in response to cytokinins. This is Two-component response regulator ORR33 from Oryza sativa subsp. indica (Rice).